Reading from the N-terminus, the 292-residue chain is Small ribosomal subunit biogenesis GTPase RsgA (292 aa).

The CP-type G domain maps to 64–221 (RSELFRPAVA…LVDTPGFSSL (158 aa)). GTP-binding positions include 113–116 (NKMD) and 164–172 (GPSGVGKST). Zn(2+) contacts are provided by C245, C250, H252, and C258.

This sequence belongs to the TRAFAC class YlqF/YawG GTPase family. RsgA subfamily. As to quaternary structure, monomer. Associates with 30S ribosomal subunit, binds 16S rRNA. Requires Zn(2+) as cofactor.

The protein localises to the cytoplasm. One of several proteins that assist in the late maturation steps of the functional core of the 30S ribosomal subunit. Helps release RbfA from mature subunits. May play a role in the assembly of ribosomal proteins into the subunit. Circularly permuted GTPase that catalyzes slow GTP hydrolysis, GTPase activity is stimulated by the 30S ribosomal subunit. The polypeptide is Small ribosomal subunit biogenesis GTPase RsgA (Clostridium botulinum (strain 657 / Type Ba4)).